A 147-amino-acid chain; its full sequence is Signal peptidase complex subunit 3 (147 aa).

Residues 1–6 lie on the Cytoplasmic side of the membrane; sequence MHSWVQ. A helical; Signal-anchor for type II membrane protein membrane pass occupies residues 7–29; that stretch reads RLLTTATTAALLLLAACCAASAL. At 30-147 the chain is on the lumenal side; the sequence is DAFHVPSVQA…EFNLPDSYTS (118 aa).

This sequence belongs to the SPCS3 family. In terms of assembly, component of the signal peptidase complex (SPC) composed of a catalytic subunit SEC11 and three accessory subunits SPCS1, SPCS2 and SPCS3. The complex induces a local thinning of the ER membrane which is used to measure the length of the signal peptide (SP) h-region of protein substrates. This ensures the selectivity of the complex towards h-regions shorter than 18-20 amino acids.

It localises to the endoplasmic reticulum membrane. Its function is as follows. Essential component of the signal peptidase complex (SPC) which catalyzes the cleavage of N-terminal signal sequences from nascent proteins as they are translocated into the lumen of the endoplasmic reticulum. Essential for the SPC catalytic activity, possibly by stabilizing and positioning the active center of the complex close to the lumenal surface. This Oryza sativa subsp. japonica (Rice) protein is Signal peptidase complex subunit 3.